The primary structure comprises 165 residues: Chorismate pyruvate-lyase (165 aa).

Substrate contacts are provided by methionine 35, arginine 77, leucine 115, and glutamate 156.

Belongs to the UbiC family. As to quaternary structure, monomer.

The protein localises to the cytoplasm. The catalysed reaction is chorismate = 4-hydroxybenzoate + pyruvate. The protein operates within cofactor biosynthesis; ubiquinone biosynthesis. Removes the pyruvyl group from chorismate, with concomitant aromatization of the ring, to provide 4-hydroxybenzoate (4HB) for the ubiquinone pathway. This chain is Chorismate pyruvate-lyase, found in Shigella dysenteriae serotype 1 (strain Sd197).